The chain runs to 402 residues: Mitochondrial inner membrane protein OXA1 (402 aa).

A mitochondrion-targeting transit peptide spans methionine 1 to phenylalanine 42. The Mitochondrial intermembrane segment spans residues asparagine 43–glutamate 118. A helical membrane pass occupies residues alanine 119–isoleucine 139. The Mitochondrial matrix segment spans residues arginine 140–arginine 199. The helical transmembrane segment at tryptophan 200 to histidine 220 threads the bilayer. Over methionine 221–aspartate 239 the chain is Mitochondrial intermembrane. Residues leucine 240 to phenylalanine 260 traverse the membrane as a helical segment. Topologically, residues threonine 261 to proline 275 are mitochondrial matrix. Residues methionine 276–methionine 292 traverse the membrane as a helical segment. Residues asparagine 293–alanine 297 lie on the Mitochondrial intermembrane side of the membrane. Residues valine 298 to leucine 316 traverse the membrane as a helical segment. Topologically, residues arginine 317–lysine 402 are mitochondrial matrix. Basic and acidic residues predominate over residues arginine 366–glutamine 385. A disordered region spans residues arginine 366–asparagine 386.

This sequence belongs to the OXA1/ALB3/YidC family. Interacts with the large ribosome subunit of mitochondrial ribosome. Interacts directly with MRP20. Interacts with OXA1.

The protein resides in the mitochondrion inner membrane. Mitochondrial inner membrane insertase that mediates the insertion of both mitochondrion-encoded precursors and nuclear-encoded proteins from the matrix into the inner membrane. Links mitoribosomes with the inner membrane. Forms pores capable of accommodating translocating protein segments. Essential for the activity and assembly of cytochrome c oxidase. Plays a central role in the translocation and export of the N-terminal part of the COX2 protein into the mitochondrial intermembrane space. The protein is Mitochondrial inner membrane protein OXA1 of Saccharomyces cerevisiae (strain ATCC 204508 / S288c) (Baker's yeast).